The chain runs to 346 residues: Phosphoribosylformylglycinamidine cyclo-ligase (346 aa).

Belongs to the AIR synthase family.

The protein localises to the cytoplasm. It carries out the reaction 2-formamido-N(1)-(5-O-phospho-beta-D-ribosyl)acetamidine + ATP = 5-amino-1-(5-phospho-beta-D-ribosyl)imidazole + ADP + phosphate + H(+). The protein operates within purine metabolism; IMP biosynthesis via de novo pathway; 5-amino-1-(5-phospho-D-ribosyl)imidazole from N(2)-formyl-N(1)-(5-phospho-D-ribosyl)glycinamide: step 2/2. In Prochlorococcus marinus (strain NATL2A), this protein is Phosphoribosylformylglycinamidine cyclo-ligase.